Here is a 618-residue protein sequence, read N- to C-terminus: MAVALLDDWCKGMDLDPKKAVLIVGIPVQYTEAAINDALKEGLPPLCAYKVIGRMFRREDEAKAVLIELPEVVDYTMMPTHIPAEGGAWEVVVKPRSPDDEFMNKLIYFLRDEGRRIVDVAKALGFSTVPTGKIELKNLDQDKPKGLKSLCNNSTCYKKLKVFSGSPFPGPGEESFETWLEEVTELMQLWQVSEREKKQCLLESLRGSALSIMQALWTSNDSLTVEQCLKALKHIFGNKEDSKVLQFRFLQSSQKPAEKVSDYLLRLEPLLQKAVQQSPLSAHSADSIRLKHVLSQVSMTTGLRGKLSLLDQQGCPPTFLELMKLTRDEEEWESTVVVEEQEQVRRDSSACEAANEVVTQAEDSREVSTQTTGEEMTSVKRRRLLWRHSAGEEGQRKESGFWAESEPDEQKPYVRAQESGNERGAWAVSHPNPKEIEAQDSQEFLPVAGNRDTLTKSWGSPDKGTGDMSVAEGQQGQGKAPNFLLARNDPNKQEQIPHSSVTTKWQDRGECQRLKWGASMITRPQGNPDRSWDTSGSQDGEDGCSELRMPTGTEAAQGVEEPATGLSWAEDTSAWEQARLGRETVPRRGGRRIQPVFRIIYTALGEPHEGSTLESFRE.

A compositionally biased stretch (basic and acidic residues) spans 390-399 (AGEEGQRKES). 3 disordered regions span residues 390 to 409 (AGEE…EPDE), 451 to 475 (RDTL…EGQQ), and 519 to 549 (SMIT…ELRM).

It belongs to the PNMA family. As to expression, restricted to testis, where expression is low. Not detected in the brain.

It localises to the nucleus. This is Paraneoplastic antigen-like protein 5 (Pnma5) from Mus musculus (Mouse).